Consider the following 99-residue polypeptide: NADH-quinone oxidoreductase subunit K (99 aa).

The next 3 helical transmembrane spans lie at 3 to 23 (PTYY…GVLV), 28 to 48 (IVVF…LVTF), and 59 to 79 (VMAF…LAII).

It belongs to the complex I subunit 4L family. In terms of assembly, NDH-1 is composed of 14 different subunits. Subunits NuoA, H, J, K, L, M, N constitute the membrane sector of the complex.

Its subcellular location is the cell membrane. The enzyme catalyses a quinone + NADH + 5 H(+)(in) = a quinol + NAD(+) + 4 H(+)(out). Functionally, NDH-1 shuttles electrons from NADH, via FMN and iron-sulfur (Fe-S) centers, to quinones in the respiratory chain. The immediate electron acceptor for the enzyme in this species is believed to be a menaquinone. Couples the redox reaction to proton translocation (for every two electrons transferred, four hydrogen ions are translocated across the cytoplasmic membrane), and thus conserves the redox energy in a proton gradient. The chain is NADH-quinone oxidoreductase subunit K from Saccharopolyspora erythraea (strain ATCC 11635 / DSM 40517 / JCM 4748 / NBRC 13426 / NCIMB 8594 / NRRL 2338).